Reading from the N-terminus, the 680-residue chain is DNA ligase (680 aa).

NAD(+) contacts are provided by residues 32–36 (DAVYD), 81–82 (SL), and E115. K117 acts as the N6-AMP-lysine intermediate in catalysis. R138, E175, K291, and K315 together coordinate NAD(+). Zn(2+)-binding residues include C409, C412, C427, and C432. Positions 600 to 680 (ASEQHLKGLT…RLQAMLKDSP (81 aa)) constitute a BRCT domain.

Belongs to the NAD-dependent DNA ligase family. LigA subfamily. The cofactor is Mg(2+). Mn(2+) is required as a cofactor.

The enzyme catalyses NAD(+) + (deoxyribonucleotide)n-3'-hydroxyl + 5'-phospho-(deoxyribonucleotide)m = (deoxyribonucleotide)n+m + AMP + beta-nicotinamide D-nucleotide.. Its function is as follows. DNA ligase that catalyzes the formation of phosphodiester linkages between 5'-phosphoryl and 3'-hydroxyl groups in double-stranded DNA using NAD as a coenzyme and as the energy source for the reaction. It is essential for DNA replication and repair of damaged DNA. This Synechococcus sp. (strain CC9902) protein is DNA ligase.